Reading from the N-terminus, the 619-residue chain is Guanylate cyclase soluble subunit beta-1 (619 aa).

Position 105 (histidine 105) interacts with heme. Residues 421 to 554 enclose the Guanylate cyclase domain; the sequence is TILFSGIVGF…NTVNLTSRTE (134 aa).

The protein belongs to the adenylyl cyclase class-4/guanylyl cyclase family. The active enzyme is formed by a heterodimer of an alpha and a beta subunit. Homotetramer; dimer of dimers (in vitro). Heterodimer with GUCY1A1. Can also form inactive homodimers in vitro. Heme serves as cofactor. As to expression, lung and brain.

It localises to the cytoplasm. The catalysed reaction is GTP = 3',5'-cyclic GMP + diphosphate. Its activity is regulated as follows. Activated by nitric oxide in the presence of magnesium or manganese ions. In terms of biological role, mediates responses to nitric oxide (NO) by catalyzing the biosynthesis of the signaling molecule cGMP. The protein is Guanylate cyclase soluble subunit beta-1 (Gucy1b1) of Rattus norvegicus (Rat).